A 188-amino-acid chain; its full sequence is Large ribosomal subunit protein bL32m (188 aa).

The Zn(2+) site is built by C110, C113, C123, and C126. Residues 162 to 188 (GETPSEHDQGKRIIERERKRPSWFTQN) form a disordered region. Over residues 165-181 (PSEHDQGKRIIERERKR) the composition is skewed to basic and acidic residues.

It belongs to the bacterial ribosomal protein bL32 family. In terms of assembly, component of the mitochondrial ribosome large subunit (39S) which comprises a 16S rRNA and about 50 distinct proteins. In terms of processing, MRPL32 precursor is processed by the m-AAA protease (composed of AFG3L2 and SPG7), which cleaves the N-terminal transit peptide. Cleavage by the m-AAA protease takes place prior to assembly into the large subunit, an essential step for mitochondrial ribosome (mitoribosome) assembly. Proper processing by the m-AAA protease is dependent on the zinc-binding region within the tightly folded C-terminal domain of MRPL32: zinc-dependent folding halts degradation initiated from the N-terminus and triggers the release of mature MRPL32.

It localises to the mitochondrion. Its function is as follows. Component of the mitochondrial large ribosomal subunit (mt-LSU). The mitochondrial ribosome (mitoribosome) is a large ribonucleoprotein complex responsible for the synthesis of proteins inside mitochondria. This chain is Large ribosomal subunit protein bL32m (MRPL32), found in Bos taurus (Bovine).